Reading from the N-terminus, the 217-residue chain is Putative thymidylate synthase (217 aa).

Residue Cys-139 is part of the active site.

It belongs to the thymidylate synthase family. Archaeal-type ThyA subfamily. In terms of assembly, monomer.

The protein localises to the cytoplasm. It functions in the pathway pyrimidine metabolism; dTTP biosynthesis. May catalyze the biosynthesis of dTMP using an unknown cosubstrate. This chain is Putative thymidylate synthase, found in Methanosarcina acetivorans (strain ATCC 35395 / DSM 2834 / JCM 12185 / C2A).